The sequence spans 366 residues: Histidinol-phosphate aminotransferase (366 aa).

Lys228 carries the post-translational modification N6-(pyridoxal phosphate)lysine.

This sequence belongs to the class-II pyridoxal-phosphate-dependent aminotransferase family. Histidinol-phosphate aminotransferase subfamily. In terms of assembly, homodimer. Requires pyridoxal 5'-phosphate as cofactor.

The catalysed reaction is L-histidinol phosphate + 2-oxoglutarate = 3-(imidazol-4-yl)-2-oxopropyl phosphate + L-glutamate. The protein operates within amino-acid biosynthesis; L-histidine biosynthesis; L-histidine from 5-phospho-alpha-D-ribose 1-diphosphate: step 7/9. This Corynebacterium diphtheriae (strain ATCC 700971 / NCTC 13129 / Biotype gravis) protein is Histidinol-phosphate aminotransferase.